Consider the following 449-residue polypeptide: UDP-N-acetylglucosamine 1-carboxyvinyltransferase (449 aa).

K51–N52 provides a ligand contact to phosphoenolpyruvate. R121 provides a ligand contact to UDP-N-acetyl-alpha-D-glucosamine. C145 serves as the catalytic Proton donor. C145 carries the post-translational modification 2-(S-cysteinyl)pyruvic acid O-phosphothioketal. Residues R150–Q154, D333, and I355 each bind UDP-N-acetyl-alpha-D-glucosamine.

The protein belongs to the EPSP synthase family. MurA subfamily.

It is found in the cytoplasm. It carries out the reaction phosphoenolpyruvate + UDP-N-acetyl-alpha-D-glucosamine = UDP-N-acetyl-3-O-(1-carboxyvinyl)-alpha-D-glucosamine + phosphate. It participates in cell wall biogenesis; peptidoglycan biosynthesis. In terms of biological role, cell wall formation. Adds enolpyruvyl to UDP-N-acetylglucosamine. This chain is UDP-N-acetylglucosamine 1-carboxyvinyltransferase, found in Burkholderia lata (strain ATCC 17760 / DSM 23089 / LMG 22485 / NCIMB 9086 / R18194 / 383).